A 501-amino-acid polypeptide reads, in one-letter code: E3 ubiquitin-protein ligase TRIM35 (501 aa).

M1 is modified (N-acetylmethionine). Position 8 is a phosphoserine (S8). The segment at 21-61 adopts an RING-type zinc-finger fold; that stretch reads CAVCYDPFRDAVTLRCGHNFCRRCVSGCWEVQTTPSCPVCK. The segment at 96 to 137 adopts a B box-type zinc-finger fold; sequence RSPRPCRAHRAPLTLFCLEDKELLCCACQADARHQEHRVQPI. 4 residues coordinate Zn(2+): C101, H104, C123, and H129. Positions 200 to 252 form a coiled coil; sequence VEEQATLDAMKEESRKKHLQAEEKMKQLAEQTEALAREIERLQMEMKEDDMTF. In terms of domain architecture, B30.2/SPRY spans 284–495; that stretch reads LESLQYRVWK…LRICHLRVSI (212 aa).

Belongs to the TRIM/RBCC family. Interacts with PKM isoform M2, but not isoform M1; this interaction may compete with that between PKM and FGFR1, and hence reduces FGFR1-dependent tyrosine phosphorylation of PKM. Interacts with IRF7; this interaction promotes IRF7 proteasomal degradation. Interacts with TRAF3; this interaction promotes TRAF3 activation. In terms of tissue distribution, widely expressed. Highly expressed in brain, heart, kidney, spleen, skeletal muscle, lung and thymus. Lower expression found in stomach, large intestine and bone marrow.

The protein resides in the cytoplasm. Its subcellular location is the nucleus. It carries out the reaction S-ubiquitinyl-[E2 ubiquitin-conjugating enzyme]-L-cysteine + [acceptor protein]-L-lysine = [E2 ubiquitin-conjugating enzyme]-L-cysteine + N(6)-ubiquitinyl-[acceptor protein]-L-lysine.. It participates in protein modification; protein ubiquitination. Functionally, E3 ubiquitin-protein ligase that participates in multiple biological processes including cell death, glucose metabolism, and in particular, the innate immune response. Mediates 'Lys-63'-linked polyubiquitination of TRAF3 thereby promoting type I interferon production via RIG-I signaling pathway. Can also catalyze 'Lys-48'-linked polyubiquitination and proteasomal degradation of viral proteins such as influenza virus PB2. Acts as a negative feedback regulator of TLR7- and TLR9-triggered signaling. Mechanistically, promotes the 'Lys-48'-linked ubiquitination of IRF7 and induces its degradation via a proteasome-dependent pathway. Reduces FGFR1-dependent tyrosine phosphorylation of PKM, inhibiting PKM-dependent lactate production, glucose metabolism, and cell growth. The protein is E3 ubiquitin-protein ligase TRIM35 (Trim35) of Mus musculus (Mouse).